The following is a 400-amino-acid chain: Homoserine O-acetyltransferase (400 aa).

The 310-residue stretch at 64–373 (NAILICHALT…TDRGHDAFLL (310 aa)) folds into the AB hydrolase-1 domain. Ser169 (nucleophile) is an active-site residue. Arg239 serves as a coordination point for substrate. Catalysis depends on residues Asp335 and His368. Asp369 contributes to the substrate binding site.

The protein belongs to the AB hydrolase superfamily. MetX family. In terms of assembly, homodimer.

Its subcellular location is the cytoplasm. The enzyme catalyses L-homoserine + acetyl-CoA = O-acetyl-L-homoserine + CoA. The protein operates within amino-acid biosynthesis; L-methionine biosynthesis via de novo pathway; O-acetyl-L-homoserine from L-homoserine: step 1/1. Its function is as follows. Transfers an acetyl group from acetyl-CoA to L-homoserine, forming acetyl-L-homoserine. This chain is Homoserine O-acetyltransferase, found in Bradyrhizobium diazoefficiens (strain JCM 10833 / BCRC 13528 / IAM 13628 / NBRC 14792 / USDA 110).